The primary structure comprises 275 residues: Probable siderophore transport system ATP-binding protein YusV (275 aa).

In terms of domain architecture, ABC transporter spans 6 to 242 (ISTETLSLGY…DLVQNVFSMN (237 aa)). 38-45 (GSNGCGKS) serves as a coordination point for ATP.

The protein belongs to the ABC transporter superfamily. As to quaternary structure, the iron-hydroxamate siderophore complex is composed of one ATP-binding protein (YusV), two transmembrane proteins (YfiZ and YfhA) and a solute-binding protein (YfiY); the catechoplate siderophore complex is composed of one ATP-binding protein (YusV), two transmembrane proteins (FeuB and FeuC) and a solute-binding protein (FeuA).

The protein resides in the cell membrane. Provides the ATPase subunit for at least 2 ABC transporter complexes; YfiYZ/YfhA/YusV involved in import of the iron-hydroxamate siderophores schizokinen, arthrobactin and corprogen, and FeuABC/YusV involved in import of the catecholate siderophores bacillibactin and enterobactin. Probably responsible for energy coupling to the transport system. The polypeptide is Probable siderophore transport system ATP-binding protein YusV (yusV) (Bacillus subtilis (strain 168)).